The primary structure comprises 509 residues: MSEILKSPIQSPLLRGFVTSRRCDASEIEDLGSNVTKGLRVAGGRRVLRSHFFSYCLTYPAVNVAATTETGSGDGATEKCVYLCGNSLGLQPKRTQTRVNQYLSTWGTQGVQGHFKPLEESPLPTWLDADDRAAQLIAPIVGASKAEVAVMQTLTANLHLLMSAFYKPDINGKHKIILESKAFPSDHFAVETQLRHHNLDPATSMITLTSPSSPEDNILTTAEILSAITTHAATTALILLPGIQYYTGQLLDIPTITAHARTHSVFLIWDLAHAVGNAPLHLHDWGVDAAAWCSYKYLNGGPGCIGGLFVHERNSAVPPPVGELEVQQKEGEWEREGYANRLAGWWGNDKRTRFAMVNRFRPVPGAAGFQLSNPSILDITSLTASLEVFAEAGGVGALRGKSLRLTAFLEELLVGEGSSIVGVEERALFRVITPSDPGQRGAQLSLMLRGGLLEAVMRELEKRAVIVDERKPDVIRVAPAPLYNSFEDCVRFVVAFGEALAVARKEVAV.

Residues L154, T155, 183–186, D270, H273, and Y295 each bind pyridoxal 5'-phosphate; that span reads FPSD. K296 carries the N6-(pyridoxal phosphate)lysine modification. Positions 345 and 373 each coordinate pyridoxal 5'-phosphate.

It belongs to the kynureninase family. As to quaternary structure, homodimer. Pyridoxal 5'-phosphate serves as cofactor.

It is found in the cytoplasm. It catalyses the reaction L-kynurenine + H2O = anthranilate + L-alanine + H(+). The enzyme catalyses 3-hydroxy-L-kynurenine + H2O = 3-hydroxyanthranilate + L-alanine + H(+). The protein operates within amino-acid degradation; L-kynurenine degradation; L-alanine and anthranilate from L-kynurenine: step 1/1. Its pathway is cofactor biosynthesis; NAD(+) biosynthesis; quinolinate from L-kynurenine: step 2/3. Its function is as follows. Catalyzes the cleavage of L-kynurenine (L-Kyn) and L-3-hydroxykynurenine (L-3OHKyn) into anthranilic acid (AA) and 3-hydroxyanthranilic acid (3-OHAA), respectively. The sequence is that of Kynureninase 1 from Chaetomium globosum (strain ATCC 6205 / CBS 148.51 / DSM 1962 / NBRC 6347 / NRRL 1970) (Soil fungus).